We begin with the raw amino-acid sequence, 350 residues long: Alcohol dehydrogenase 1 (350 aa).

Zn(2+) is bound by residues C46, H69, C100, C103, C106, C114, and C156. Residues 180–186, D204, K209, 271–273, and R343 contribute to the NAD(+) site; these read GAAGGLG and VGL.

It belongs to the zinc-containing alcohol dehydrogenase family. Homotetramer. Requires Zn(2+) as cofactor.

It is found in the cytoplasm. It carries out the reaction a primary alcohol + NAD(+) = an aldehyde + NADH + H(+). The catalysed reaction is a secondary alcohol + NAD(+) = a ketone + NADH + H(+). This Kluyveromyces lactis (strain ATCC 8585 / CBS 2359 / DSM 70799 / NBRC 1267 / NRRL Y-1140 / WM37) (Yeast) protein is Alcohol dehydrogenase 1 (ADH1).